The sequence spans 256 residues: Hydroxypyruvate/pyruvate aldolase (256 aa).

The Proton acceptor role is filled by histidine 48. Residues glutamate 152 and aspartate 178 each contribute to the a divalent metal cation site.

This sequence belongs to the HpcH/HpaI aldolase family. A divalent metal cation is required as a cofactor.

The enzyme catalyses D-glyceraldehyde + pyruvate = 2-dehydro-3-deoxy-L-galactonate. Functionally, aldolase which can catalyze in vitro the aldolisation reaction between hydroxypyruvate (HPA) or pyruvate (PA) and D-glyceraldehyde (D-GA). The condensation of pyruvate and D-glyceraldehyde produces 2-dehydro-3-deoxy-L-galactonate as the major product. Has weak activity with hydroxypyruvate and D-glyceraldehyde. This Roseobacter denitrificans (strain ATCC 33942 / OCh 114) (Erythrobacter sp. (strain OCh 114)) protein is Hydroxypyruvate/pyruvate aldolase.